The primary structure comprises 91 residues: Acylphosphatase (91 aa).

Positions 3-91 (CLKAVVKGKV…GNYGDFHIKY (89 aa)) constitute an Acylphosphatase-like domain. Residues R18 and N36 contribute to the active site.

The protein belongs to the acylphosphatase family.

The catalysed reaction is an acyl phosphate + H2O = a carboxylate + phosphate + H(+). The sequence is that of Acylphosphatase (acyP) from Dehalococcoides mccartyi (strain ATCC BAA-2266 / KCTC 15142 / 195) (Dehalococcoides ethenogenes (strain 195)).